The primary structure comprises 228 residues: Ribosomal RNA small subunit methyltransferase G (228 aa).

S-adenosyl-L-methionine contacts are provided by residues Gly89, Leu94, 140–141, and Arg159; that span reads VE.

Belongs to the methyltransferase superfamily. RNA methyltransferase RsmG family.

It is found in the cytoplasm. The catalysed reaction is guanosine(527) in 16S rRNA + S-adenosyl-L-methionine = N(7)-methylguanosine(527) in 16S rRNA + S-adenosyl-L-homocysteine. Its function is as follows. Specifically methylates the N7 position of guanine in position 527 of 16S rRNA. In Burkholderia cenocepacia (strain ATCC BAA-245 / DSM 16553 / LMG 16656 / NCTC 13227 / J2315 / CF5610) (Burkholderia cepacia (strain J2315)), this protein is Ribosomal RNA small subunit methyltransferase G.